A 432-amino-acid chain; its full sequence is Cyclic 2,3-diphosphoglycerate synthetase (432 aa).

Belongs to the cyclic 2,3-diphosphoglycerate synthetase family.

Its subcellular location is the cytoplasm. It catalyses the reaction (2R)-2,3-bisphosphoglycerate + ATP + H(+) = cyclic (2R)-2,3-bisphosphoglycerate + ADP + phosphate. Its function is as follows. Catalyzes the formation of cyclic 2,3-diphosphoglycerate (cDPG) by formation of an intramolecular phosphoanhydride bond at the expense of ATP. The polypeptide is Cyclic 2,3-diphosphoglycerate synthetase (Thermococcus onnurineus (strain NA1)).